The chain runs to 560 residues: Nibrin homolog (560 aa).

The region spanning 25–87 (YKVGRKDCDV…YGTFFNKVQG (63 aa)) is the FHA domain. The BRCT domain occupies 115–190 (TFRLSFVPIV…KQIVLGDWFK (76 aa)). The short motif at 511–518 (YKRGTVID) is the Nuclear localization signal element.

This sequence belongs to the Nibrin family. As to quaternary structure, component of the MRN complex composed of two heterodimers RAD50 and MRE11 associated with a single NBS1.

The protein resides in the nucleus. It localises to the chromosome. Functionally, component of the MRN complex, which plays a central role in double-strand break (DSB) repair, DNA recombination, maintenance of telomere integrity and meiosis. The MRN complex is involved in the repair of DNA double-strand breaks (DSBs) via homologous recombination (HR), an error-free mechanism which primarily occurs during S and G2 phases. The complex (1) mediates the end resection of damaged DNA, which generates proper single-stranded DNA, a key initial steps in HR, and is (2) required for the recruitment of other repair factors and efficient activation of ATM and ATR upon DNA damage. The MRN complex possesses single-strand endonuclease activity and double-strand-specific 3'-5' exonuclease activity, which are provided by MRE11, to initiate end resection, which is required for single-strand invasion and recombination. Within the MRN complex, NBS1 acts as a protein-protein adapter, which specifically recognizes and binds phosphorylated proteins, promoting their recruitment to DNA damage sites. Recruits MRE11 and RAD50 components of the MRN complex to DSBs in response to DNA damage. The chain is Nibrin homolog from Oryza sativa subsp. indica (Rice).